Here is a 177-residue protein sequence, read N- to C-terminus: Ribulose bisphosphate carboxylase small subunit, chloroplastic 6 (177 aa).

The transit peptide at 1 to 56 directs the protein to the chloroplast; it reads MASSMMASTAAVARVGPAQTNMVAPFNGLRSSVAFPATRKANNDLSTLPSNGGRVS.

The protein belongs to the RuBisCO small chain family. As to quaternary structure, heterohexadecamer of 8 large and 8 small subunits.

It is found in the plastid. The protein resides in the chloroplast. Functionally, ruBisCO catalyzes two reactions: the carboxylation of D-ribulose 1,5-bisphosphate, the primary event in carbon dioxide fixation, as well as the oxidative fragmentation of the pentose substrate. Both reactions occur simultaneously and in competition at the same active site. Although the small subunit is not catalytic it is essential for maximal activity. The polypeptide is Ribulose bisphosphate carboxylase small subunit, chloroplastic 6 (Lemna gibba (Swollen duckweed)).